A 107-amino-acid polypeptide reads, in one-letter code: Non-structural protein 1, peptide 1 (107 aa).

A helical transmembrane segment spans residues 39–59 (ILLAAGVGIIATLLVLLLCSC).

It belongs to the rotavirus B NSP1-1 family.

It is found in the host membrane. The protein is Non-structural protein 1, peptide 1 of Homo sapiens (Human).